Reading from the N-terminus, the 214-residue chain is Ribonuclease HII (214 aa).

The RNase H type-2 domain maps to 26–214 (EIVCGVDEAG…PVRAALDLIR (189 aa)). Residues D32, E33, and D124 each contribute to the a divalent metal cation site.

This sequence belongs to the RNase HII family. Mn(2+) is required as a cofactor. The cofactor is Mg(2+).

The protein localises to the cytoplasm. The catalysed reaction is Endonucleolytic cleavage to 5'-phosphomonoester.. In terms of biological role, endonuclease that specifically degrades the RNA of RNA-DNA hybrids. The polypeptide is Ribonuclease HII (Burkholderia cenocepacia (strain HI2424)).